The chain runs to 363 residues: Aminomethyltransferase (363 aa).

This sequence belongs to the GcvT family. The glycine cleavage system is composed of four proteins: P, T, L and H.

The catalysed reaction is N(6)-[(R)-S(8)-aminomethyldihydrolipoyl]-L-lysyl-[protein] + (6S)-5,6,7,8-tetrahydrofolate = N(6)-[(R)-dihydrolipoyl]-L-lysyl-[protein] + (6R)-5,10-methylene-5,6,7,8-tetrahydrofolate + NH4(+). Functionally, the glycine cleavage system catalyzes the degradation of glycine. The chain is Aminomethyltransferase from Thermotoga neapolitana (strain ATCC 49049 / DSM 4359 / NBRC 107923 / NS-E).